The primary structure comprises 542 residues: CTP synthase (542 aa).

The tract at residues 1–265 (MTRYIFITGG…DDEVLSVFGI (265 aa)) is amidoligase domain. Serine 13 provides a ligand contact to CTP. UTP is bound at residue serine 13. Residues 14-19 (SLGKGL) and aspartate 71 each bind ATP. Mg(2+) is bound by residues aspartate 71 and glutamate 139. CTP-binding positions include 146-148 (DIE), 186-191 (KTKPTQ), and lysine 222. UTP-binding positions include 186–191 (KTKPTQ) and lysine 222. A Glutamine amidotransferase type-1 domain is found at 291 to 541 (TIAIVGKYTG…VEAAVEQSRL (251 aa)). Glycine 353 lines the L-glutamine pocket. Catalysis depends on cysteine 380, which acts as the Nucleophile; for glutamine hydrolysis. L-glutamine-binding positions include 381 to 384 (FGMQ), glutamate 404, and arginine 469. Residues histidine 514 and glutamate 516 contribute to the active site.

This sequence belongs to the CTP synthase family. As to quaternary structure, homotetramer.

It carries out the reaction UTP + L-glutamine + ATP + H2O = CTP + L-glutamate + ADP + phosphate + 2 H(+). It catalyses the reaction L-glutamine + H2O = L-glutamate + NH4(+). The enzyme catalyses UTP + NH4(+) + ATP = CTP + ADP + phosphate + 2 H(+). Its pathway is pyrimidine metabolism; CTP biosynthesis via de novo pathway; CTP from UDP: step 2/2. Its activity is regulated as follows. Allosterically activated by GTP, when glutamine is the substrate; GTP has no effect on the reaction when ammonia is the substrate. The allosteric effector GTP functions by stabilizing the protein conformation that binds the tetrahedral intermediate(s) formed during glutamine hydrolysis. Inhibited by the product CTP, via allosteric rather than competitive inhibition. Functionally, catalyzes the ATP-dependent amination of UTP to CTP with either L-glutamine or ammonia as the source of nitrogen. Regulates intracellular CTP levels through interactions with the four ribonucleotide triphosphates. The polypeptide is CTP synthase (Parvibaculum lavamentivorans (strain DS-1 / DSM 13023 / NCIMB 13966)).